The sequence spans 88 residues: Small ribosomal subunit protein bS20 (88 aa).

2 disordered regions span residues 1-29 and 69-88; these read MANTAQARKRARQAVKQNEHNSSLRSKLR and KNTASRQKSRLSAAIKAMAA.

The protein belongs to the bacterial ribosomal protein bS20 family.

In terms of biological role, binds directly to 16S ribosomal RNA. The chain is Small ribosomal subunit protein bS20 from Polynucleobacter asymbioticus (strain DSM 18221 / CIP 109841 / QLW-P1DMWA-1) (Polynucleobacter necessarius subsp. asymbioticus).